The sequence spans 313 residues: Cytosolic Fe-S cluster assembly factor NUBP1 homolog (313 aa).

A disordered region spans residues 1–25 (MSDVPDDANAGCPGTGSAGAGKASG). [4Fe-4S] cluster-binding residues include Cys-12, Cys-26, Cys-29, and Cys-35. Residue 66 to 73 (GKGGVGKS) participates in ATP binding. Residues Cys-240 and Cys-243 each coordinate [4Fe-4S] cluster.

This sequence belongs to the Mrp/NBP35 ATP-binding proteins family. NUBP1/NBP35 subfamily. In terms of assembly, heterotetramer of 2 NUBP1 and 2 NUBP2 chains. [4Fe-4S] cluster is required as a cofactor. Expressed in head amphid and labial ciliated sensory neurons and tail phasmid ciliated chemosensory neurons.

It is found in the cytoplasm. The protein resides in the cell projection. Component of the cytosolic iron-sulfur (Fe/S) protein assembly (CIA) machinery. Required for maturation of extramitochondrial Fe-S proteins. The NUBP1-NUBP2 heterotetramer forms a Fe-S scaffold complex, mediating the de novo assembly of an Fe-S cluster and its transfer to target apoproteins. Regulates cilium formation and structure. This Caenorhabditis elegans protein is Cytosolic Fe-S cluster assembly factor NUBP1 homolog.